Here is an 892-residue protein sequence, read N- to C-terminus: Ataxin-7 (892 aa).

Positions 1 to 15 are enriched in basic and acidic residues; sequence MSERAADDVRGEPRR. Disordered regions lie at residues 1–74 and 195–247; these read MSER…SAAA and SKGG…SRVP. Over residues 16–38 the composition is skewed to low complexity; it reads AAAAAGGAAAAAARQQQQQQQQQ. Residues 39 to 55 show a composition bias toward pro residues; the sequence is QPPPPQPQRQQHPPPPP. Over residues 195–222 the composition is skewed to low complexity; sequence SKGGSASGSNRSSSGGVLSASSSSSKLL. A Glycyl lysine isopeptide (Lys-Gly) (interchain with G-Cter in SUMO); alternate cross-link involves residue lysine 257. A Glycyl lysine isopeptide (Lys-Gly) (interchain with G-Cter in SUMO2); alternate cross-link involves residue lysine 257. 4 disordered regions span residues 298 to 328, 389 to 505, 616 to 730, and 818 to 892; these read PTLP…NSNN, HKNK…ESVE, KSVP…SSHS, and SHGS…KARP. Composition is skewed to basic and acidic residues over residues 318–327 and 389–403; these read LEKKPEDNSN and HKNK…RHPD. The 68-residue stretch at 334–401 folds into the SCA7 domain; sequence KRLSEREFDP…KTREKELIRH (68 aa). 3 stretches are compositionally biased toward pro residues: residues 405–419, 448–458, and 468–483; these read QQPP…PAPP, HTPSLPRPPGC, and IDPP…PLPA. The segment covering 493-502 has biased composition (acidic residues); it reads EEGEGDDKEE. Residues 616 to 629 are compositionally biased toward polar residues; it reads KSVPAHGTTLNAQP. Residues 640-669 show a composition bias toward low complexity; the sequence is SMQSRQVSSSSSSPSTPSGLSSVPSSPMSR. The segment covering 670–680 has biased composition (basic residues); sequence KPQKLKSSKSL. Over residues 685 to 695 the composition is skewed to polar residues; that stretch reads SSGNSTNCQNA. Low complexity-rich tracts occupy residues 716–730 and 840–851; these read HSSS…SSHS and SPSSSSINNSSS.

It belongs to the ataxin-7 family. As to quaternary structure, component of the SAGA transcription coactivator-HAT complex, at least composed of SUPT3H, GCN5L2, TAF5L, TAF6L, SUPT7L, TADA3L, TAD1L, TAF10, TAF12, TRRAP, TAF9 and ATXN7. The STAGA core complex is associated with a subcomplex required for histone deubiquitination composed of ATXN7L3, ENY2 and USP22. Interacts with SORBS1, PSMC1 and CRX. Interacts with TRRAP, GCN5L2 and TAF10. Interacts with alpha tubulin. In terms of processing, proteolytically cleaved by caspase-7 (CASP7). The cleavage may be involved in SCA7 degeneration: the isoform fragments may exert distinct toxic influences that could contribute to selective neurodegeneration. Post-translationally, sumoylation decreases the aggregation propensity and cellular toxicity of forms with an expanded poly-Gln region but has no effect on subcellular location or interaction with components of the STAGA complex. In terms of tissue distribution, isoform a is expressed in CNS, but is expressed predominantly in the peripherical tissues. As to expression, isoform b is expressed in CNS. Also highly expressed in the frontal lobe, skeletal muscle and spinal cord and is expressed at a lower level in the lung, lymphoblast and intestine.

The protein localises to the nucleus. It localises to the nucleolus. Its subcellular location is the nucleus matrix. The protein resides in the cytoplasm. It is found in the cytoskeleton. Functionally, acts as a component of the SAGA (aka STAGA) transcription coactivator-HAT complex. Mediates the interaction of SAGA complex with the CRX and is involved in CRX-dependent gene activation. Probably involved in tethering the deubiquitination module within the SAGA complex. Necessary for microtubule cytoskeleton stabilization. Involved in neurodegeneration. The chain is Ataxin-7 (ATXN7) from Homo sapiens (Human).